Consider the following 279-residue polypeptide: Biotin synthase (279 aa).

The Radical SAM core domain maps to 2–228; it reads KTIMLCAISS…NARIMIAGGR (227 aa). [4Fe-4S] cluster contacts are provided by cysteine 17, cysteine 21, and cysteine 24. 4 residues coordinate [2Fe-2S] cluster: cysteine 61, cysteine 96, cysteine 154, and arginine 221.

It belongs to the radical SAM superfamily. Biotin synthase family. As to quaternary structure, homodimer. [4Fe-4S] cluster is required as a cofactor. [2Fe-2S] cluster serves as cofactor.

It carries out the reaction (4R,5S)-dethiobiotin + (sulfur carrier)-SH + 2 reduced [2Fe-2S]-[ferredoxin] + 2 S-adenosyl-L-methionine = (sulfur carrier)-H + biotin + 2 5'-deoxyadenosine + 2 L-methionine + 2 oxidized [2Fe-2S]-[ferredoxin]. Its pathway is cofactor biosynthesis; biotin biosynthesis; biotin from 7,8-diaminononanoate: step 2/2. Functionally, catalyzes the conversion of dethiobiotin (DTB) to biotin by the insertion of a sulfur atom into dethiobiotin via a radical-based mechanism. The chain is Biotin synthase from Campylobacter curvus (strain 525.92).